A 125-amino-acid chain; its full sequence is Small ribosomal subunit protein uS12 (125 aa).

Position 89 is a 3-methylthioaspartic acid (Asp-89).

Belongs to the universal ribosomal protein uS12 family. In terms of assembly, part of the 30S ribosomal subunit. Contacts proteins S8 and S17. May interact with IF1 in the 30S initiation complex.

Its function is as follows. With S4 and S5 plays an important role in translational accuracy. Interacts with and stabilizes bases of the 16S rRNA that are involved in tRNA selection in the A site and with the mRNA backbone. Located at the interface of the 30S and 50S subunits, it traverses the body of the 30S subunit contacting proteins on the other side and probably holding the rRNA structure together. The combined cluster of proteins S8, S12 and S17 appears to hold together the shoulder and platform of the 30S subunit. The sequence is that of Small ribosomal subunit protein uS12 from Acidovorax sp. (strain JS42).